Reading from the N-terminus, the 382-residue chain is Putative glutamate--cysteine ligase 2-1 (382 aa).

Belongs to the glutamate--cysteine ligase type 2 family. YbdK subfamily.

It catalyses the reaction L-cysteine + L-glutamate + ATP = gamma-L-glutamyl-L-cysteine + ADP + phosphate + H(+). Functionally, ATP-dependent carboxylate-amine ligase which exhibits weak glutamate--cysteine ligase activity. This is Putative glutamate--cysteine ligase 2-1 from Nocardioides sp. (strain ATCC BAA-499 / JS614).